A 346-amino-acid chain; its full sequence is NADH-ubiquinone oxidoreductase chain 2 (346 aa).

Helical transmembrane passes span 25–45 (HWIL…PLIS), 52–72 (AIEA…LILF), 95–115 (CLIL…HFWF), 124–144 (LITA…LLLM), 149–169 (LNPA…GWMG), 178–196 (ILAF…IIIY), 200–219 (LTIL…FLSL), 247–267 (TLLS…WLII), 274–294 (EMTP…FFYL), and 326–346 (AILT…TTLV).

Belongs to the complex I subunit 2 family.

It is found in the mitochondrion inner membrane. It carries out the reaction a ubiquinone + NADH + 5 H(+)(in) = a ubiquinol + NAD(+) + 4 H(+)(out). Core subunit of the mitochondrial membrane respiratory chain NADH dehydrogenase (Complex I) that is believed to belong to the minimal assembly required for catalysis. Complex I functions in the transfer of electrons from NADH to the respiratory chain. The immediate electron acceptor for the enzyme is believed to be ubiquinone. The polypeptide is NADH-ubiquinone oxidoreductase chain 2 (MT-ND2) (Coturnix japonica (Japanese quail)).